We begin with the raw amino-acid sequence, 347 residues long: Ketol-acid reductoisomerase (NADP(+)) (347 aa).

The region spanning 3–182 (TKMFYDKDID…GSGRAGILET (180 aa)) is the KARI N-terminal Rossmann domain. Residues 26–29 (YGAQ), arginine 49, serine 53, and 83–86 (DELQ) each bind NADP(+). Histidine 108 is an active-site residue. Glycine 134 provides a ligand contact to NADP(+). The KARI C-terminal knotted domain maps to 183–328 (TFEEETTEDL…KKVRAMMPWI (146 aa)). Mg(2+)-binding residues include aspartate 191, glutamate 195, glutamate 227, and glutamate 231. Serine 252 contributes to the substrate binding site.

It belongs to the ketol-acid reductoisomerase family. The cofactor is Mg(2+).

It catalyses the reaction (2R)-2,3-dihydroxy-3-methylbutanoate + NADP(+) = (2S)-2-acetolactate + NADPH + H(+). It carries out the reaction (2R,3R)-2,3-dihydroxy-3-methylpentanoate + NADP(+) = (S)-2-ethyl-2-hydroxy-3-oxobutanoate + NADPH + H(+). Its pathway is amino-acid biosynthesis; L-isoleucine biosynthesis; L-isoleucine from 2-oxobutanoate: step 2/4. It functions in the pathway amino-acid biosynthesis; L-valine biosynthesis; L-valine from pyruvate: step 2/4. Functionally, involved in the biosynthesis of branched-chain amino acids (BCAA). Catalyzes an alkyl-migration followed by a ketol-acid reduction of (S)-2-acetolactate (S2AL) to yield (R)-2,3-dihydroxy-isovalerate. In the isomerase reaction, S2AL is rearranged via a Mg-dependent methyl migration to produce 3-hydroxy-3-methyl-2-ketobutyrate (HMKB). In the reductase reaction, this 2-ketoacid undergoes a metal-dependent reduction by NADPH to yield (R)-2,3-dihydroxy-isovalerate. This Leuconostoc mesenteroides subsp. mesenteroides (strain ATCC 8293 / DSM 20343 / BCRC 11652 / CCM 1803 / JCM 6124 / NCDO 523 / NBRC 100496 / NCIMB 8023 / NCTC 12954 / NRRL B-1118 / 37Y) protein is Ketol-acid reductoisomerase (NADP(+)).